Consider the following 379-residue polypeptide: Bifunctional riboflavin kinase/FMN phosphatase (379 aa).

The residue at position 2 (Ser-2) is an N-acetylserine. The active-site Nucleophile; for FMN phosphatase activity is the Asp-17. Residues Asp-17 and Asp-19 each contribute to the Mg(2+) site. The active-site Proton donor; for FMN phosphatase activity is Asp-19. Positions 248, 254, 260, and 262 each coordinate ATP. Thr-260 contributes to the Mg(2+) binding site. The Nucleophile; for riboflavin kinase activity role is filled by Glu-312. Leu-315, His-317, and Tyr-324 together coordinate ATP. The FMN site is built by Arg-337 and Phe-342.

In the N-terminal section; belongs to the HAD-like hydrolase superfamily. CbbY/CbbZ/Gph/YieH family. The protein in the C-terminal section; belongs to the flavokinase family. As to quaternary structure, monomer. Mg(2+) serves as cofactor.

The catalysed reaction is riboflavin + ATP = FMN + ADP + H(+). It catalyses the reaction FMN + H2O = riboflavin + phosphate. The protein operates within cofactor biosynthesis; FMN biosynthesis; FMN from riboflavin (ATP route): step 1/1. Functionally, bifunctional enzyme that catalyzes the hydrolysis of flavin-mononucleotide (FMN) to riboflavin (vitamin B2) and the phosphorylation of riboflavin to form (FMN) coenzyme. The sequence is that of Bifunctional riboflavin kinase/FMN phosphatase from Arabidopsis thaliana (Mouse-ear cress).